Reading from the N-terminus, the 533-residue chain is UDP-glucuronosyltransferase 1-2 (533 aa).

The signal sequence occupies residues 1-27 (MDTGLCAPLRGLSGLLLLLCALPWAEG). 4 N-linked (GlcNAc...) asparagine glycosylation sites follow: Asn-133, Asn-141, Asn-295, and Asn-433. Residues 491–507 (VIGFLLAIVLTVVFIVY) form a helical membrane-spanning segment.

The protein belongs to the UDP-glycosyltransferase family.

It localises to the microsome. The protein localises to the endoplasmic reticulum membrane. It catalyses the reaction glucuronate acceptor + UDP-alpha-D-glucuronate = acceptor beta-D-glucuronoside + UDP + H(+). In terms of biological role, UDPGT is of major importance in the conjugation and subsequent elimination of potentially toxic xenobiotics and endogenous compounds. The sequence is that of UDP-glucuronosyltransferase 1-2 (Ugt1a2) from Rattus norvegicus (Rat).